Consider the following 164-residue polypeptide: Dehydrin Rab16C (164 aa).

The span at 42 to 51 (MGGHHAGAGG) shows a compositional bias: gly residues. The segment at 42 to 164 (MGGHHAGAGG…KIKEKLPGQH (123 aa)) is disordered. The span at 105–115 (GNNHQQQQMMG) shows a compositional bias: low complexity. Over residues 128–138 (GMTGAGTGTGV) the composition is skewed to gly residues. A compositionally biased stretch (basic and acidic residues) spans 147–164 (GEKKGFMDKIKEKLPGQH).

The protein belongs to the plant dehydrin family.

This is Dehydrin Rab16C (RAB16C) from Oryza sativa subsp. indica (Rice).